A 149-amino-acid chain; its full sequence is uncharacterized protein (149 aa).

This is an uncharacterized protein from Homo sapiens (Human).